Reading from the N-terminus, the 408-residue chain is MSWDQVWIDVNVATMDPSISAPYGAITNAAIAVKDGKIAWLGPRSELPAFDVLSIPVYRGKGGWITPGLIDAHTHLVFAGNRANEFELRLKGATYEEIARAGGGIISTVNACREADEAELFDLGRQRLNALAKEGVTTVEIKSGYGLDTETELKILRVARELGQHHHVDVKTTFLGAHAVPPEFKDNSDGYVDLIINKMLPAVIAENLADAVDVFCENIAFNLEQTERVLSAAKAAGLQVKLHAEQLSNMGGSELAARLGAKSVDHIEYLDEAGVKALSESGTCAVLLPGAFYFLRETQKPPIDLLRQYGVPMVLASDFNPGSSPICSTLLMLNMGCTLFRLTPEEALAGLTLNAAKALGIEESVGSLVVGKQADFCLWDIATPAQLAYSYGVNPCKDVVKNGKLVHQ.

Fe(3+)-binding residues include histidine 73 and histidine 75. Residues histidine 73 and histidine 75 each contribute to the Zn(2+) site. 4-imidazolone-5-propanoate-binding residues include arginine 82, tyrosine 145, and histidine 178. Tyrosine 145 provides a ligand contact to N-formimidoyl-L-glutamate. Histidine 243 is a Fe(3+) binding site. Zn(2+) is bound at residue histidine 243. Position 246 (glutamine 246) interacts with 4-imidazolone-5-propanoate. Aspartate 318 serves as a coordination point for Fe(3+). Aspartate 318 is a binding site for Zn(2+). The N-formimidoyl-L-glutamate site is built by asparagine 320 and glycine 322. Serine 323 contacts 4-imidazolone-5-propanoate.

Belongs to the metallo-dependent hydrolases superfamily. HutI family. Zn(2+) is required as a cofactor. Fe(3+) serves as cofactor.

The protein resides in the cytoplasm. The enzyme catalyses 4-imidazolone-5-propanoate + H2O = N-formimidoyl-L-glutamate. Its pathway is amino-acid degradation; L-histidine degradation into L-glutamate; N-formimidoyl-L-glutamate from L-histidine: step 3/3. In terms of biological role, catalyzes the hydrolytic cleavage of the carbon-nitrogen bond in imidazolone-5-propanoate to yield N-formimidoyl-L-glutamate. It is the third step in the universal histidine degradation pathway. The chain is Imidazolonepropionase from Shewanella sp. (strain ANA-3).